Reading from the N-terminus, the 195-residue chain is Granulocyte colony-stimulating factor (195 aa).

An N-terminal signal peptide occupies residues 1–21 (MKLMVLQLLLWHSALWTVHEA). 2 disulfide bridges follow: cysteine 57/cysteine 63 and cysteine 85/cysteine 95. A glycan (O-linked (GalNAc...) threonine) is linked at threonine 154.

This sequence belongs to the IL-6 superfamily. As to quaternary structure, monomer. In terms of processing, O-glycosylated.

The protein resides in the secreted. Granulocyte/macrophage colony-stimulating factors are cytokines that act in hematopoiesis by controlling the production, differentiation, and function of 2 related white cell populations of the blood, the granulocytes and the monocytes-macrophages. This CSF induces granulocytes. This Bos taurus (Bovine) protein is Granulocyte colony-stimulating factor (CSF3).